Reading from the N-terminus, the 190-residue chain is Large ribosomal subunit protein bL25 (190 aa).

This sequence belongs to the bacterial ribosomal protein bL25 family. CTC subfamily. As to quaternary structure, part of the 50S ribosomal subunit; part of the 5S rRNA/L5/L18/L25 subcomplex. Contacts the 5S rRNA. Binds to the 5S rRNA independently of L5 and L18.

In terms of biological role, this is one of the proteins that binds to the 5S RNA in the ribosome where it forms part of the central protuberance. In Neisseria gonorrhoeae (strain ATCC 700825 / FA 1090), this protein is Large ribosomal subunit protein bL25.